Consider the following 247-residue polypeptide: Chymase (247 aa).

The signal sequence occupies residues 1–19 (MLLLPLPLLLFFLCSRAEA). A propeptide spans 20-21 (GE) (activation peptide). Residues 22 to 245 (IIGGTECKPH…YRPWINKILQ (224 aa)) form the Peptidase S1 domain. Cys51 and Cys67 are joined by a disulfide. His66 (charge relay system) is an active-site residue. N-linked (GlcNAc...) asparagine glycosylation is found at Asn80 and Asn103. The active-site Charge relay system is the Asp110. 2 disulfides stabilise this stretch: Cys144/Cys209 and Cys175/Cys188. Ser203 acts as the Charge relay system in catalysis.

It belongs to the peptidase S1 family. Granzyme subfamily.

The protein localises to the secreted. It is found in the cytoplasmic granule. The catalysed reaction is Preferential cleavage: Phe-|-Xaa &gt; Tyr-|-Xaa &gt; Trp-|-Xaa &gt; Leu-|-Xaa.. Functionally, major secreted protease of mast cells with suspected roles in vasoactive peptide generation, extracellular matrix degradation, and regulation of gland secretion. The polypeptide is Chymase (CMA1) (Macaca fascicularis (Crab-eating macaque)).